The following is an 89-amino-acid chain: Small ribosomal subunit protein bS20 (89 aa).

This sequence belongs to the bacterial ribosomal protein bS20 family.

Binds directly to 16S ribosomal RNA. The polypeptide is Small ribosomal subunit protein bS20 (Wolbachia sp. subsp. Drosophila simulans (strain wRi)).